Reading from the N-terminus, the 940-residue chain is Isoleucine--tRNA ligase (940 aa).

The short motif at 59 to 69 (PYANGDIHIGH) is the 'HIGH' region element. Glu563 is an L-isoleucyl-5'-AMP binding site. A 'KMSKS' region motif is present at residues 604–608 (KMSKS). ATP is bound at residue Lys607. Zn(2+)-binding residues include Cys903, Cys906, Cys923, and Cys926.

The protein belongs to the class-I aminoacyl-tRNA synthetase family. IleS type 1 subfamily. As to quaternary structure, monomer. The cofactor is Zn(2+).

Its subcellular location is the cytoplasm. It catalyses the reaction tRNA(Ile) + L-isoleucine + ATP = L-isoleucyl-tRNA(Ile) + AMP + diphosphate. In terms of biological role, catalyzes the attachment of isoleucine to tRNA(Ile). As IleRS can inadvertently accommodate and process structurally similar amino acids such as valine, to avoid such errors it has two additional distinct tRNA(Ile)-dependent editing activities. One activity is designated as 'pretransfer' editing and involves the hydrolysis of activated Val-AMP. The other activity is designated 'posttransfer' editing and involves deacylation of mischarged Val-tRNA(Ile). This Wigglesworthia glossinidia brevipalpis protein is Isoleucine--tRNA ligase.